Reading from the N-terminus, the 326-residue chain is MQPPVPGPLGLLDPAEGLSRRKKTSLWFVGSLLLVSVLIVTVGLAATTRTENVTVGGYYPGIILGFGSFLGIIGINLVENRRQMLVAAIVFISFGVVAAFCCAIVDGVFAAQHIEPRPLTTGRCQFYSSGVGYLYDVYQTEVTCHSLDGKCQLKVRSNTCYCCDLYACGSAEPSPAYYEFIGVSGCQDVLHLYRLLWASAVLNVLGLFLGIITAAVLGAFKDMVPLSQLAYGPAVPPQTLYNPAQQILAYAGFRLTPEPVPTCSSYPLPLQPCSRFPVAPSSALASSEDLQPPSPSSSGSGLPGQAPPCYAPTYFPPGEKPPPYAP.

The next 4 helical transmembrane spans lie at 26–46, 55–75, 85–105, and 200–220; these read LWFV…GLAA, VGGY…IIGI, LVAA…CAIV, and AVLN…LGAF. Positions 284–326 are disordered; that stretch reads LASSEDLQPPSPSSSGSGLPGQAPPCYAPTYFPPGEKPPPYAP. Positions 305 to 326 are enriched in pro residues; that stretch reads QAPPCYAPTYFPPGEKPPPYAP.

This sequence belongs to the TMEM255 family.

Its subcellular location is the membrane. The protein is Transmembrane protein 255B (TMEM255B) of Homo sapiens (Human).